The primary structure comprises 444 residues: Acyl-CoA 6-desaturase (444 aa).

Residues M1–F21 form a disordered region. Residues M1 to H130 lie on the Cytoplasmic side of the membrane. The 78-residue stretch at M18–A95 folds into the Cytochrome b5 heme-binding domain. Residues L131–L151 form a helical membrane-spanning segment. S152 is a topological domain (lumenal). A helical membrane pass occupies residues Y153–A173. Topologically, residues Q174–E264 are cytoplasmic. The short motif at H180–H184 is the Histidine box-1 element. The Histidine box-2 signature appears at H217–H221. A helical membrane pass occupies residues Y265–M285. Over T286–R305 the chain is Lumenal. Residues F306–I326 traverse the membrane as a helical segment. Residues R327–K444 lie on the Cytoplasmic side of the membrane. Residues Q382 to H386 carry the Histidine box-3 motif.

This sequence belongs to the fatty acid desaturase type 1 family. In terms of tissue distribution, highly expressed in the adrenal gland, liver, brain, and testis, tissues where lipogenesis and steroidogenesis are active. Also detected in lung, heart, and skeletal muscle.

The protein resides in the endoplasmic reticulum membrane. The enzyme catalyses (9Z,12Z)-octadecadienoyl-CoA + 2 Fe(II)-[cytochrome b5] + O2 + 2 H(+) = (6Z,9Z,12Z)-octadecatrienoyl-CoA + 2 Fe(III)-[cytochrome b5] + 2 H2O. The catalysed reaction is (9Z,12Z,15Z)-octadecatrienoyl-CoA + 2 Fe(II)-[cytochrome b5] + O2 + 2 H(+) = (6Z,9Z,12Z,15Z)-octadecatetraenoyl-CoA + 2 Fe(III)-[cytochrome b5] + 2 H2O. It catalyses the reaction (9Z,12Z,15Z,18Z,21Z)-tetracosapentaenoyl-CoA + 2 Fe(II)-[cytochrome b5] + O2 + 2 H(+) = (6Z,9Z,12Z,15Z,18Z,21Z)-tetracosahexaenoyl-CoA + 2 Fe(III)-[cytochrome b5] + 2 H2O. It carries out the reaction (11E)-octadecenoyl-CoA + 2 Fe(II)-[cytochrome b5] + O2 + 2 H(+) = (6Z,11E)-octadecadienoyl-CoA + 2 Fe(III)-[cytochrome b5] + 2 H2O. The enzyme catalyses (11Z,14Z)-eicosadienoyl-CoA + 2 Fe(II)-[cytochrome b5] + O2 + 2 H(+) = (8Z,11Z,14Z)-eicosatrienoyl-CoA + 2 Fe(III)-[cytochrome b5] + 2 H2O. The catalysed reaction is (11Z,14Z,17Z)-eicosatrienoyl-CoA + 2 Fe(II)-[cytochrome b5] + O2 + 2 H(+) = (8Z,11Z,14Z,17Z)-eicosatetraenoyl-CoA + 2 Fe(III)-[cytochrome b5] + 2 H2O. Its pathway is lipid metabolism; polyunsaturated fatty acid biosynthesis. In terms of biological role, involved in the biosynthesis of highly unsaturated fatty acids (HUFA) from the essential polyunsaturated fatty acids (PUFA) linoleic acid (LA) (18:2n-6) and alpha-linolenic acid (ALA) (18:3n-3) precursors, acting as a fatty acyl-coenzyme A (CoA) desaturase that introduces a cis double bond at carbon 6 of the fatty acyl chain. Catalyzes the first and rate limiting step in this pathway which is the desaturation of LA (18:2n-6) and ALA (18:3n-3) into gamma-linoleate (GLA) (18:3n-6) and stearidonate (18:4n-3), respectively. Subsequently, in the biosynthetic pathway of HUFA n-3 series, it desaturates tetracosapentaenoate (24:5n-3) to tetracosahexaenoate (24:6n-3), which is then converted to docosahexaenoate (DHA)(22:6n-3), an important lipid for nervous system function. It can also desaturate (11E)-octadecenoate (trans-vaccenoate) at carbon 6 generating (6Z,11E)-octadecadienoate. In addition to Delta-6 activity, this enzyme exhibits Delta-8 activity with slight biases toward n-3 fatty acyl-CoA substrates. This Mus musculus (Mouse) protein is Acyl-CoA 6-desaturase.